A 369-amino-acid chain; its full sequence is Protein DUF642 L-GALACTONO-1,4-LACTONE-RESPONSIVE GENE 2 (369 aa).

The first 19 residues, 1–19 (MEGVTVVSFFLLFIATAMA), serve as a signal peptide directing secretion. Asn125 carries N-linked (GlcNAc...) asparagine glycosylation.

Expressed in roots, seedlings and leaves.

It localises to the secreted. The protein localises to the cell wall. Its function is as follows. Involved in the regulation of testa rupture during seed germination. Required during roots and rosettes development. The protein is Protein DUF642 L-GALACTONO-1,4-LACTONE-RESPONSIVE GENE 2 of Arabidopsis thaliana (Mouse-ear cress).